Reading from the N-terminus, the 301-residue chain is Protein SCO1 homolog, mitochondrial (301 aa).

A mitochondrion-targeting transit peptide spans 1–67 (MAMLVLVPGR…PGYCLGTRPL (67 aa)). The interval 63–91 (GTRPLSTARPPPPWSQKGPGDSTRPSKPG) is disordered. The Mitochondrial matrix segment spans residues 68–92 (STARPPPPWSQKGPGDSTRPSKPGP). Residues 93–111 (VSWKSLAITFAIGGALLAG) form a helical membrane-spanning segment. Over 112-301 (MKHVKKEKAE…THMRPYRKKS (190 aa)) the chain is Mitochondrial intermembrane. The segment at 118–131 (EKAEKLEKERQRHI) is important for dimerization. Residues Cys169, Cys173, and His260 each coordinate Cu cation. Cys169 and Cys173 are disulfide-bonded.

It belongs to the SCO1/2 family. As to quaternary structure, homodimer. Interacts with COA6. Found in a complex with TMEM177, COX20, COA6, MT-CO2/COX2, COX18 and SCO2. Interacts with TMEM177 in a COX20-dependent manner. Interacts with COX20 in a MT-CO2/COX2- and COX18-dependent manner. Interacts with COX16. In terms of tissue distribution, predominantly expressed in tissues characterized by high rates of oxidative phosphorylation (OxPhos), including muscle, heart, and brain.

The protein localises to the mitochondrion. Its subcellular location is the mitochondrion inner membrane. Functionally, copper metallochaperone essential for the maturation of cytochrome c oxidase subunit II (MT-CO2/COX2). Not required for the synthesis of MT-CO2/COX2 but plays a crucial role in stabilizing MT-CO2/COX2 during its subsequent maturation. Involved in transporting copper to the Cu(A) site on MT-CO2/COX2. Plays an important role in the regulation of copper homeostasis by controlling the abundance and cell membrane localization of copper transporter CTR1. In Homo sapiens (Human), this protein is Protein SCO1 homolog, mitochondrial (SCO1).